Reading from the N-terminus, the 469-residue chain is Endoplasmic reticulum oxidoreductin-1 (469 aa).

A signal peptide spans 1–36 (MGKGAIKEEESEKKRKTWRWPLATLVVVFLAVAVSS). 6 disulfides stabilise this stretch: Cys52–Cys71, Cys54–Cys69, Cys108–Cys372, Cys117–Cys122, Cys222–Cys231, and Cys375–Cys378. 3 residues coordinate FAD: Arg201, Thr203, and Trp214. Residues Ser242, His245, Arg275, and Arg282 each contribute to the FAD site. Asn365 carries an N-linked (GlcNAc...) asparagine glycan.

This sequence belongs to the EROs family. As to quaternary structure, may function both as a monomer and a homodimer. It depends on FAD as a cofactor. N-glycosylated.

It localises to the endoplasmic reticulum membrane. Its function is as follows. Essential oxidoreductase that oxidizes proteins in the endoplasmic reticulum to produce disulfide bonds. Acts by oxidizing directly PDI isomerase through a direct disulfide exchange. Does not act as a direct oxidant of folding substrate, but relies on PDI to transfer oxidizing equivalent. Does not oxidize all PDI related proteins, suggesting that it can discriminate between PDI and related proteins. Its reoxidation probably involves electron transfer to molecular oxygen via FAD. Acts independently of glutathione. May be responsible for a significant proportion of reactive oxygen species (ROS) in the cell, thereby being a source of oxidative stress. The polypeptide is Endoplasmic reticulum oxidoreductin-1 (AERO1) (Arabidopsis thaliana (Mouse-ear cress)).